A 125-amino-acid chain; its full sequence is Ribosome-binding factor A (125 aa).

Belongs to the RbfA family. In terms of assembly, monomer. Binds 30S ribosomal subunits, but not 50S ribosomal subunits or 70S ribosomes.

Its subcellular location is the cytoplasm. Its function is as follows. One of several proteins that assist in the late maturation steps of the functional core of the 30S ribosomal subunit. Associates with free 30S ribosomal subunits (but not with 30S subunits that are part of 70S ribosomes or polysomes). Required for efficient processing of 16S rRNA. May interact with the 5'-terminal helix region of 16S rRNA. This chain is Ribosome-binding factor A, found in Xylella fastidiosa (strain 9a5c).